The sequence spans 421 residues: Synaptotagmin-12 (421 aa).

Topologically, residues Met-1–Gly-18 are vesicular. A helical transmembrane segment spans residues Trp-19–Leu-39. Topologically, residues Trp-40–Asn-421 are cytoplasmic. At Ser-97 the chain carries Phosphoserine; by PKA. 2 positions are modified to phosphoserine: Ser-99 and Ser-214. 2 C2 domains span residues Thr-152–Leu-272 and Ala-283–His-416.

It belongs to the synaptotagmin family. Homodimer. Can also form heterodimers. Interacts with SYT1. Post-translationally, phosphorylation of Ser-97 is required for mossy-fiber long-term potentiation. Expressed in the brain, specifically in neurons of the cerebellum, cortex, hippocampus, olfactory bulb, brainstem and spinal cord (at protein level).

The protein localises to the cytoplasmic vesicle. It localises to the secretory vesicle. The protein resides in the synaptic vesicle membrane. Functionally, synaptic vesicle phosphoprotein that enhances spontaneous neurotransmitter release but does not effect induced neurotransmitter release. Unlike other synaptotagmins, it does not bind Ca(2+) or phospholipids. Essential for mossy-fiber long-term potentiation in the hippocampus. The chain is Synaptotagmin-12 from Rattus norvegicus (Rat).